A 620-amino-acid polypeptide reads, in one-letter code: Pentatricopeptide repeat-containing protein At5g66520 (620 aa).

PPR repeat units lie at residues 79–113, 114–148, 149–179, 180–210, 211–245, 246–280, 281–311, 312–346, 347–382, and 383–413; these read DTFL…SAPH, NAYT…GYEN, DVYA…IPEP, DDVS…MAEK, NAIS…DVEP, DNVS…RIRM, DSVL…IKKK, SVQA…GIKP, NVIT…NLKP, and TIEH…MPLK. The type E motif stretch occupies residues 418–493; that stretch reads IWGALLKACR…VPGCSTISLE (76 aa). The type E(+) motif stretch occupies residues 494–524; that stretch reads GTTHEFLAGDRSHPEIEKIQSKWRIMRRKLE. The type DYW motif stretch occupies residues 525–620; it reads ENGYVPELEE…DGKCSCGDYW (96 aa).

This sequence belongs to the PPR family. PCMP-H subfamily.

The protein is Pentatricopeptide repeat-containing protein At5g66520 (PCMP-H61) of Arabidopsis thaliana (Mouse-ear cress).